Reading from the N-terminus, the 97-residue chain is Large ribosomal subunit protein bL28 (97 aa).

The interval 1–20 (MSRRCELTAKGPQVGHKVSH) is disordered.

It belongs to the bacterial ribosomal protein bL28 family.

The chain is Large ribosomal subunit protein bL28 from Afipia carboxidovorans (strain ATCC 49405 / DSM 1227 / KCTC 32145 / OM5) (Oligotropha carboxidovorans).